The primary structure comprises 229 residues: Sperm-associated microtubule inner protein 5 (229 aa).

The disordered stretch occupies residues 181 to 201 (PEFSGPGQTPPSEDPQAPRPC).

Microtubule inner protein component of sperm flagellar doublet microtubules. In terms of tissue distribution, expressed in testis (at protein level).

The protein localises to the cytoplasm. The protein resides in the cytoskeleton. It localises to the flagellum axoneme. Its subcellular location is the nucleus. Its function is as follows. Microtubule inner protein (MIP) part of the dynein-decorated doublet microtubules (DMTs) in flagellum axoneme. May serve to reinforce and thus stabilize the microtubule structure in the sperm flagella. This is Sperm-associated microtubule inner protein 5 (Spmip5) from Mus musculus (Mouse).